Consider the following 39-residue polypeptide: Photosystem II reaction center protein L (39 aa).

A helical membrane pass occupies residues 18–38 (SLYLGLLFVFVTGVLMSSYFF).

This sequence belongs to the PsbL family. PSII is composed of 1 copy each of membrane proteins PsbA, PsbB, PsbC, PsbD, PsbE, PsbF, PsbH, PsbI, PsbJ, PsbK, PsbL, PsbM, PsbT, PsbX, PsbY, PsbZ, Psb30/Ycf12, peripheral proteins PsbO, CyanoQ (PsbQ), PsbU, PsbV and a large number of cofactors. It forms dimeric complexes.

The protein resides in the cellular thylakoid membrane. One of the components of the core complex of photosystem II (PSII). PSII is a light-driven water:plastoquinone oxidoreductase that uses light energy to abstract electrons from H(2)O, generating O(2) and a proton gradient subsequently used for ATP formation. It consists of a core antenna complex that captures photons, and an electron transfer chain that converts photonic excitation into a charge separation. This subunit is found at the monomer-monomer interface and is required for correct PSII assembly and/or dimerization. The protein is Photosystem II reaction center protein L of Parasynechococcus marenigrum (strain WH8102).